A 137-amino-acid polypeptide reads, in one-letter code: Transcription antitermination protein NusB (137 aa).

This sequence belongs to the NusB family.

In terms of biological role, involved in transcription antitermination. Required for transcription of ribosomal RNA (rRNA) genes. Binds specifically to the boxA antiterminator sequence of the ribosomal RNA (rrn) operons. In Aeromonas salmonicida (strain A449), this protein is Transcription antitermination protein NusB.